The chain runs to 91 residues: DNA-directed RNA polymerase subunit omega (91 aa).

It belongs to the RNA polymerase subunit omega family. The RNAP catalytic core consists of 2 alpha, 1 beta, 1 beta' and 1 omega subunit. When a sigma factor is associated with the core the holoenzyme is formed, which can initiate transcription.

The enzyme catalyses RNA(n) + a ribonucleoside 5'-triphosphate = RNA(n+1) + diphosphate. In terms of biological role, promotes RNA polymerase assembly. Latches the N- and C-terminal regions of the beta' subunit thereby facilitating its interaction with the beta and alpha subunits. The polypeptide is DNA-directed RNA polymerase subunit omega (Nocardia farcinica (strain IFM 10152)).